The sequence spans 323 residues: MATRNRTTVYRKHRDACKSARAPLSLSASDSFGGPVIEMVSGSFSRSNHSSYAPLNSYDPGPSSSDAFTIGMPPAWVDDSEEITFNIQKVRDKMNELAKAHSKALMPTFGDNKGIHREVEMLTHEITDLLRKSEKRLQMLSTRGPSEESNLRKNVQRSLATDLQNLSMELRRKQSTYLKRLQQQKEGQDEVDLEFNVNGKMSRLDEEDELGGMGFDEHQTIKLKEGQHVSAEREREIQQVLGSVNDLAQIMKDLSALVIDQGTIVDRIDYNVQNVSTSVEEGYKQLQKAERTQREGAMVKCATILLVLCLIMIVLLILKNILF.

At 1-302 the chain is on the cytoplasmic side; sequence MATRNRTTVY…QREGAMVKCA (302 aa). In terms of domain architecture, t-SNARE coiled-coil homology spans 227–289; it reads QHVSAERERE…EEGYKQLQKA (63 aa). The chain crosses the membrane as a helical; Anchor for type IV membrane protein span at residues 303–323; the sequence is TILLVLCLIMIVLLILKNILF.

This sequence belongs to the syntaxin family. In terms of assembly, interacts with VTI12 and SYP61 to form a t-SNARE complex and with VPS45. As to expression, expressed at low levels in roots, stems, flowers and leaves.

The protein localises to the golgi apparatus. The protein resides in the trans-Golgi network membrane. Contributes to the regulation of secretory and vacuolar transport pathways in the post-Golgi network, and to the maintenance of the Golgi apparatus and trans-Golgi network (TGN) morphologies. Vesicle trafficking protein that functions in the secretory pathway and mediates liposome fusion. Required for extracellular resistance responses to a fungal pathogen. Also involved in the protection of chloroplasts from salicylic acid-dependent biotic stress. The sequence is that of Syntaxin-42 from Arabidopsis thaliana (Mouse-ear cress).